Reading from the N-terminus, the 428-residue chain is 3-oxo-tetronate kinase (428 aa).

Residues S267, 365–368 (GGET), and G409 contribute to the ATP site.

It belongs to the four-carbon acid sugar kinase family.

It carries out the reaction 3-dehydro-L-erythronate + ATP = 3-dehydro-4-O-phospho-L-erythronate + ADP + H(+). It catalyses the reaction 3-dehydro-D-erythronate + ATP = 3-dehydro-4-O-phospho-D-erythronate + ADP + H(+). Functionally, catalyzes the ATP-dependent phosphorylation of 3-oxo-tetronate to 3-oxo-tetronate 4-phosphate. In Burkholderia multivorans (strain ATCC 17616 / 249), this protein is 3-oxo-tetronate kinase.